Consider the following 540-residue polypeptide: Phenylalanine--tRNA ligase beta subunit (540 aa).

Residues 268-343 (LQHKSIKITA…ITYGYNNLSP (76 aa)) form the B5 domain. Mg(2+) is bound by residues Asp321, Asp327, Glu330, and Glu331.

It belongs to the phenylalanyl-tRNA synthetase beta subunit family. Type 2 subfamily. As to quaternary structure, tetramer of two alpha and two beta subunits. The cofactor is Mg(2+).

The protein localises to the cytoplasm. The enzyme catalyses tRNA(Phe) + L-phenylalanine + ATP = L-phenylalanyl-tRNA(Phe) + AMP + diphosphate + H(+). The chain is Phenylalanine--tRNA ligase beta subunit from Sulfurisphaera tokodaii (strain DSM 16993 / JCM 10545 / NBRC 100140 / 7) (Sulfolobus tokodaii).